The chain runs to 105 residues: Replication initiation control protein YabA (105 aa).

Zn(2+) is bound by residues histidine 79, cysteine 81, cysteine 95, and cysteine 98.

It belongs to the YabA family. Homotetramer. Interacts with both DnaA and DnaN, acting as a bridge between these two proteins. Requires Zn(2+) as cofactor.

The protein resides in the cytoplasm. Its subcellular location is the nucleoid. Its function is as follows. Involved in control of chromosome replication initiation. Inhibits the cooperative binding of DnaA to the oriC region, thus negatively regulating initiation of chromosome replication. Inhibits the ability of DnaA-ATP to form a helix on DNA; does not disassemble preformed DnaA-DNA helices. Decreases the residence time of DnaA on the chromosome at its binding sites (oriC, replication forks and promoter-binding sites). Tethers DnaA to the replication machinery via the DNA polymerase beta sliding clamp subunit (dnaN). Associates with oriC and other DnaA targets on the chromosome in a DnaA-dependent manner. The protein is Replication initiation control protein YabA of Streptococcus suis (strain 98HAH33).